We begin with the raw amino-acid sequence, 464 residues long: Soluble pyridine nucleotide transhydrogenase (464 aa).

35–44 (EASSQVGGSC) serves as a coordination point for FAD.

This sequence belongs to the class-I pyridine nucleotide-disulfide oxidoreductase family. Requires FAD as cofactor.

The protein localises to the cytoplasm. The enzyme catalyses NAD(+) + NADPH = NADH + NADP(+). Its function is as follows. Conversion of NADPH, generated by peripheral catabolic pathways, to NADH, which can enter the respiratory chain for energy generation. This Marinomonas sp. (strain MWYL1) protein is Soluble pyridine nucleotide transhydrogenase.